The sequence spans 100 residues: Replication restart protein PriB (100 aa).

One can recognise an SSB domain in the interval 1 to 99; the sequence is MGFNNLVSLA…LRIQNIQEYK (99 aa).

Belongs to the PriB family. As to quaternary structure, homodimer. Interacts with PriA and DnaT. Component of the replication restart primosome. Primosome assembly occurs via a 'hand-off' mechanism. PriA binds to replication forks, subsequently PriB then DnaT bind; DnaT then displaces ssDNA to generate the helicase loading substrate.

Involved in the restart of stalled replication forks, which reloads the replicative helicase on sites other than the origin of replication; the PriA-PriB pathway is the major replication restart pathway. During primosome assembly it facilitates complex formation between PriA and DnaT on DNA; stabilizes PriA on DNA. Stimulates the DNA unwinding activity of PriA helicase. The sequence is that of Replication restart protein PriB from Neisseria meningitidis serogroup B (strain ATCC BAA-335 / MC58).